Reading from the N-terminus, the 359-residue chain is NAC domain-containing protein 45 (359 aa).

Positions Leu-19–Lys-185 constitute an NAC domain. The DNA-binding element occupies Val-130–Glu-191.

As to expression, expressed in roots. Expressed at low levels in leaves, stems and panicles.

The protein resides in the nucleus. Its function is as follows. Transcription activator involved in responses to drought stress and salt stress. Transactivates the stress response genes LEA19 and PM19L. The protein is NAC domain-containing protein 45 of Oryza sativa subsp. japonica (Rice).